Consider the following 333-residue polypeptide: Photosystem II assembly lipoprotein Ycf48 (333 aa).

The first 23 residues, 1-23 (MTRFVSSAINLLLVLVLGVSLSG), serve as a signal peptide directing secretion. Cys-24 is lipidated: N-palmitoyl cysteine. Residue Cys-24 is the site of S-diacylglycerol cysteine attachment.

Belongs to the Ycf48 family. In terms of assembly, part of early PSII assembly complexes which includes D1 (psbA) and PsbI; not found in mature PSII. Binds to the lumenal side of PSII complexes. Interacts with YidC.

The protein localises to the cellular thylakoid membrane. Its function is as follows. A factor required for optimal assembly of photosystem II (PSII), acting in the early stages of PSII assembly. Also plays a role in replacement of photodamaged D1 (psbA). Assists YidC in synthesis of chlorophyll-binding proteins. The sequence is that of Photosystem II assembly lipoprotein Ycf48 from Parasynechococcus marenigrum (strain WH8102).